Here is a 122-residue protein sequence, read N- to C-terminus: Large ribosomal subunit protein uL14c (122 aa).

It belongs to the universal ribosomal protein uL14 family. As to quaternary structure, part of the 50S ribosomal subunit.

Its subcellular location is the plastid. The protein resides in the chloroplast. Binds to 23S rRNA. In Pyropia yezoensis (Susabi-nori), this protein is Large ribosomal subunit protein uL14c.